The primary structure comprises 618 residues: DNA mismatch repair protein MutL (618 aa).

The tract at residues 371-401 (AREPATPRYSGGASGGSGGRQSVGGWSHAQP) is disordered. The segment covering 382–392 (GASGGSGGRQS) has biased composition (gly residues).

Belongs to the DNA mismatch repair MutL/HexB family.

This protein is involved in the repair of mismatches in DNA. It is required for dam-dependent methyl-directed DNA mismatch repair. May act as a 'molecular matchmaker', a protein that promotes the formation of a stable complex between two or more DNA-binding proteins in an ATP-dependent manner without itself being part of a final effector complex. The protein is DNA mismatch repair protein MutL of Salmonella arizonae (strain ATCC BAA-731 / CDC346-86 / RSK2980).